Consider the following 335-residue polypeptide: Nuclear envelope-associated protein 2 (335 aa).

Coiled-coil stretches lie at residues 55–85 (RKEA…ELVA) and 125–260 (CSVL…LKKK). A Bipartite nuclear localization signal motif is present at residues 239–260 (KTKELESQLERQRRADQELKKK). Residues 312-329 (FWDTSGFKIVVSMSMLIL) traverse the membrane as a helical segment.

Forms homomers and heteromers with NEAP1 and NEAP3. Interacts with SUN1 and SUN2.

The protein resides in the nucleus inner membrane. Its subcellular location is the nucleus. The protein localises to the nucleoplasm. The chain is Nuclear envelope-associated protein 2 from Arabidopsis thaliana (Mouse-ear cress).